A 125-amino-acid polypeptide reads, in one-letter code: MDTIKLSIVTPNGEIFNDDVKTVTLPGKEGEFGVLPGHSSLVSSLTVGVIVIEKVDSTEAVAINWGHVKVDEKSVDVLADGAIALTAGKDSEIAKNIEAAKELVNSVKDSNISVAAVEAKINSFA.

This sequence belongs to the ATPase epsilon chain family. In terms of assembly, F-type ATPases have 2 components, CF(1) - the catalytic core - and CF(0) - the membrane proton channel. CF(1) has five subunits: alpha(3), beta(3), gamma(1), delta(1), epsilon(1). CF(0) has three main subunits: a, b and c.

Its subcellular location is the cell inner membrane. In terms of biological role, produces ATP from ADP in the presence of a proton gradient across the membrane. The sequence is that of ATP synthase epsilon chain from Aliarcobacter butzleri (strain RM4018) (Arcobacter butzleri).